The sequence spans 455 residues: 1,4-beta-D-glucan cellobiohydrolase C (455 aa).

The first 19 residues, 1-19 (MHYSASGLALAFLLPAIQA), serve as a signal peptide directing secretion. Positions 20–55 (QQTLYGQCGGSGWTGATSCVAGAACSTLNQWYAQCL) constitute a CBM1 domain. Disulfide bonds link cysteine 27–cysteine 44 and cysteine 38–cysteine 54. Residues 59 to 92 (TTTSTTLTTTTSSVTTTSNPGSTTTTSSVTVTAT) form a thr-rich linker region. The segment at 66-86 (TTTTSSVTTTSNPGSTTTTSS) is disordered. Residues 93-450 (ASGNPFSGYQ…QAYFVQLLQN (358 aa)) form a catalytic region. Residue aspartate 185 is part of the active site. 2 disulfide bridges follow: cysteine 186–cysteine 245 and cysteine 377–cysteine 424. Residue aspartate 231 is the Proton donor of the active site. The active-site Nucleophile is the aspartate 410.

The protein belongs to the glycosyl hydrolase 6 (cellulase B) family.

Its subcellular location is the secreted. It catalyses the reaction Hydrolysis of (1-&gt;4)-beta-D-glucosidic linkages in cellulose and cellotetraose, releasing cellobiose from the non-reducing ends of the chains.. Functionally, the biological conversion of cellulose to glucose generally requires three types of hydrolytic enzymes: (1) Endoglucanases which cut internal beta-1,4-glucosidic bonds; (2) Exocellobiohydrolases that cut the disaccharide cellobiose from the non-reducing end of the cellulose polymer chain; (3) Beta-1,4-glucosidases which hydrolyze the cellobiose and other short cello-oligosaccharides to glucose. Active against carboxymethylcellulose, beta-glucan and lichenan. This is 1,4-beta-D-glucan cellobiohydrolase C (cbhC) from Emericella nidulans (strain FGSC A4 / ATCC 38163 / CBS 112.46 / NRRL 194 / M139) (Aspergillus nidulans).